Reading from the N-terminus, the 288-residue chain is MKVDINAIKELRDLTGAGVGDCKDALTSCNGDIEKAKTYLREQGIAKAYKKSNKDVSDGLVAICIDGNKGAILEVNSETDFVARNEKFQKLVLNLAFLANQYGIENIEDFLKCEYANNTNINDEIMSNIAVIGENIHLNKIGCLSVSSGVVCGYIHNPIVDNLGKVGAIVALESNCDVEKLKIFARQIAMHIVATKPEALSLDVLDQNVIDKERDIIKKQVEQLNKPASVLEKIIDGRMAKFYQEVVLMNQMFIMDSQFTVSELIKKKEEELGSSINIVDYKLFIINK.

The tract at residues 79 to 82 is involved in Mg(2+) ion dislocation from EF-Tu; it reads TDFV.

This sequence belongs to the EF-Ts family.

Its subcellular location is the cytoplasm. Its function is as follows. Associates with the EF-Tu.GDP complex and induces the exchange of GDP to GTP. It remains bound to the aminoacyl-tRNA.EF-Tu.GTP complex up to the GTP hydrolysis stage on the ribosome. This is Elongation factor Ts from Ehrlichia ruminantium (strain Welgevonden).